Consider the following 142-residue polypeptide: MKTFTAKPETVKRDWYVVDADGKTLGRLATEVARRLRGKHKAEYTPHVDTGDYIIIVNAEKVAVTGNKRSDKIYYHHTGHIGGIKQATFEEMIARRPERVIEIAVKGMLPKGPLGRAMYRKLKVYAGSEHNHAAQQPQVLDI.

The protein belongs to the universal ribosomal protein uL13 family. In terms of assembly, part of the 50S ribosomal subunit.

In terms of biological role, this protein is one of the early assembly proteins of the 50S ribosomal subunit, although it is not seen to bind rRNA by itself. It is important during the early stages of 50S assembly. The sequence is that of Large ribosomal subunit protein uL13 from Photorhabdus laumondii subsp. laumondii (strain DSM 15139 / CIP 105565 / TT01) (Photorhabdus luminescens subsp. laumondii).